A 1005-amino-acid polypeptide reads, in one-letter code: Beta-galactosidase (1005 aa).

The Proton donor role is filled by glutamate 455. The active-site Nucleophile is the glutamate 526.

The protein belongs to the glycosyl hydrolase 2 family.

It catalyses the reaction Hydrolysis of terminal non-reducing beta-D-galactose residues in beta-D-galactosides.. This chain is Beta-galactosidase (lacZ), found in Actinobacillus pleuropneumoniae (Haemophilus pleuropneumoniae).